The chain runs to 943 residues: Isoleucine--tRNA ligase (943 aa).

The 'HIGH' region motif lies at 59 to 69; the sequence is PYANGRIHLGH. Glu577 lines the L-isoleucyl-5'-AMP pocket. A 'KMSKS' region motif is present at residues 618–622; the sequence is KMSKS. Residue Lys621 coordinates ATP. Zn(2+)-binding residues include Cys906, Cys909, Cys926, and Cys929.

Belongs to the class-I aminoacyl-tRNA synthetase family. IleS type 1 subfamily. In terms of assembly, monomer. Zn(2+) serves as cofactor.

It localises to the cytoplasm. It catalyses the reaction tRNA(Ile) + L-isoleucine + ATP = L-isoleucyl-tRNA(Ile) + AMP + diphosphate. Its function is as follows. Catalyzes the attachment of isoleucine to tRNA(Ile). As IleRS can inadvertently accommodate and process structurally similar amino acids such as valine, to avoid such errors it has two additional distinct tRNA(Ile)-dependent editing activities. One activity is designated as 'pretransfer' editing and involves the hydrolysis of activated Val-AMP. The other activity is designated 'posttransfer' editing and involves deacylation of mischarged Val-tRNA(Ile). This chain is Isoleucine--tRNA ligase, found in Stenotrophomonas maltophilia (strain R551-3).